Consider the following 214-residue polypeptide: Proteasome subunit beta type-6 (214 aa).

Positions 1–14 are cleaved as a propeptide — removed in mature form; it reads MEAPEWLDNAVDLG. Threonine 15 acts as the Nucleophile in catalysis.

Belongs to the peptidase T1B family. As to quaternary structure, the 26S proteasome consists of a 20S proteasome core and two 19S regulatory subunits. The 20S proteasome core is composed of 28 subunits that are arranged in four stacked rings, resulting in a barrel-shaped structure. The two end rings are each formed by seven alpha subunits, and the two central rings are each formed by seven beta subunits. The catalytic chamber with the active sites is on the inside of the barrel.

It is found in the cytoplasm. The protein localises to the nucleus. The enzyme catalyses Cleavage of peptide bonds with very broad specificity.. In terms of biological role, the proteasome is a multicatalytic proteinase complex which is characterized by its ability to cleave peptides with Arg, Phe, Tyr, Leu, and Glu adjacent to the leaving group at neutral or slightly basic pH. The proteasome has an ATP-dependent proteolytic activity. In Dictyostelium discoideum (Social amoeba), this protein is Proteasome subunit beta type-6 (psmB6).